The chain runs to 450 residues: 23S rRNA (uracil(1939)-C(5))-methyltransferase RlmD (450 aa).

Residues 1-62 (MPVAGPLDIV…PSYEQAGVVN (62 aa)) enclose the TRAM domain. Residues Cys-75, Cys-81, Cys-84, and Cys-163 each coordinate [4Fe-4S] cluster. The S-adenosyl-L-methionine site is built by Gln-271, Phe-300, Asn-305, Glu-321, Asn-349, and Asp-370. Cys-406 (nucleophile) is an active-site residue.

It belongs to the class I-like SAM-binding methyltransferase superfamily. RNA M5U methyltransferase family. RlmD subfamily.

It catalyses the reaction uridine(1939) in 23S rRNA + S-adenosyl-L-methionine = 5-methyluridine(1939) in 23S rRNA + S-adenosyl-L-homocysteine + H(+). In terms of biological role, catalyzes the formation of 5-methyl-uridine at position 1939 (m5U1939) in 23S rRNA. In Ralstonia pickettii (strain 12J), this protein is 23S rRNA (uracil(1939)-C(5))-methyltransferase RlmD.